A 473-amino-acid polypeptide reads, in one-letter code: Aspartyl/glutamyl-tRNA(Asn/Gln) amidotransferase subunit B (473 aa).

Belongs to the GatB/GatE family. GatB subfamily. In terms of assembly, heterotrimer of A, B and C subunits.

It carries out the reaction L-glutamyl-tRNA(Gln) + L-glutamine + ATP + H2O = L-glutaminyl-tRNA(Gln) + L-glutamate + ADP + phosphate + H(+). The enzyme catalyses L-aspartyl-tRNA(Asn) + L-glutamine + ATP + H2O = L-asparaginyl-tRNA(Asn) + L-glutamate + ADP + phosphate + 2 H(+). Functionally, allows the formation of correctly charged Asn-tRNA(Asn) or Gln-tRNA(Gln) through the transamidation of misacylated Asp-tRNA(Asn) or Glu-tRNA(Gln) in organisms which lack either or both of asparaginyl-tRNA or glutaminyl-tRNA synthetases. The reaction takes place in the presence of glutamine and ATP through an activated phospho-Asp-tRNA(Asn) or phospho-Glu-tRNA(Gln). This chain is Aspartyl/glutamyl-tRNA(Asn/Gln) amidotransferase subunit B, found in Wolbachia sp. subsp. Drosophila simulans (strain wRi).